We begin with the raw amino-acid sequence, 219 residues long: Large ribosomal subunit protein uL3 (219 aa).

This sequence belongs to the universal ribosomal protein uL3 family. In terms of assembly, part of the 50S ribosomal subunit. Forms a cluster with proteins L14 and L19.

Its function is as follows. One of the primary rRNA binding proteins, it binds directly near the 3'-end of the 23S rRNA, where it nucleates assembly of the 50S subunit. The polypeptide is Large ribosomal subunit protein uL3 (Chlamydia pneumoniae (Chlamydophila pneumoniae)).